Consider the following 247-residue polypeptide: Probable transcriptional regulatory protein MS0710 (247 aa).

This sequence belongs to the TACO1 family.

It is found in the cytoplasm. The sequence is that of Probable transcriptional regulatory protein MS0710 from Mannheimia succiniciproducens (strain KCTC 0769BP / MBEL55E).